Consider the following 125-residue polypeptide: Dirigent protein 22 (125 aa).

N-linked (GlcNAc...) asparagine glycosylation is found at asparagine 8, asparagine 30, and asparagine 65.

This sequence belongs to the plant dirigent protein family. As to quaternary structure, homodimer.

It localises to the secreted. The protein resides in the extracellular space. The protein localises to the apoplast. Its function is as follows. Dirigent proteins impart stereoselectivity on the phenoxy radical-coupling reaction, yielding optically active lignans from two molecules of coniferyl alcohol in the biosynthesis of lignans, flavonolignans, and alkaloids and thus plays a central role in plant secondary metabolism. The polypeptide is Dirigent protein 22 (DIR22) (Arabidopsis thaliana (Mouse-ear cress)).